Here is a 296-residue protein sequence, read N- to C-terminus: Giardin subunit alpha-2 (296 aa).

Annexin repeat units lie at residues 2 to 71 (PKLS…MDLF), 73 to 143 (DRHE…MEKW), 153 to 223 (GSPD…AHFA), and 226 to 293 (GMHK…TLWR).

It belongs to the annexin family. Giardin subunit alpha subfamily.

It localises to the cytoplasm. It is found in the cytoskeleton. Its function is as follows. Giardins are involved in parasite attachment to the intestinal mucosa and in the cytoskeletal disassembly and reassembly that marks the transition from infectious trophozoite to transmissible cyst. They may interact with other cytoskeletal proteins such as microtubules in the microribbons or crossbridges, to maintain the integrity of the ventral disk. This is Giardin subunit alpha-2 from Giardia intestinalis (Giardia lamblia).